The following is a 100-amino-acid chain: Urease subunit gamma (100 aa).

This sequence belongs to the urease gamma subunit family. In terms of assembly, heterotrimer of UreA (gamma), UreB (beta) and UreC (alpha) subunits. Three heterotrimers associate to form the active enzyme.

Its subcellular location is the cytoplasm. The enzyme catalyses urea + 2 H2O + H(+) = hydrogencarbonate + 2 NH4(+). It functions in the pathway nitrogen metabolism; urea degradation; CO(2) and NH(3) from urea (urease route): step 1/1. In Prochlorococcus marinus (strain AS9601), this protein is Urease subunit gamma.